Reading from the N-terminus, the 309-residue chain is DNA-directed RNA polymerase subunit alpha (309 aa).

The segment at 1–225 is alpha N-terminal domain (alpha-NTD); that stretch reads MFQVQCLESA…SLFKLVNSAD (225 aa). An alpha C-terminal domain (alpha-CTD) region spans residues 237-309; the sequence is IVQVSQTDVT…LHERFNLTLN (73 aa).

It belongs to the RNA polymerase alpha chain family. As to quaternary structure, in plastids the minimal PEP RNA polymerase catalytic core is composed of four subunits: alpha, beta, beta', and beta''. When a (nuclear-encoded) sigma factor is associated with the core the holoenzyme is formed, which can initiate transcription.

It is found in the plastid. The protein localises to the chloroplast. The enzyme catalyses RNA(n) + a ribonucleoside 5'-triphosphate = RNA(n+1) + diphosphate. In terms of biological role, DNA-dependent RNA polymerase catalyzes the transcription of DNA into RNA using the four ribonucleoside triphosphates as substrates. The polypeptide is DNA-directed RNA polymerase subunit alpha (Emiliania huxleyi (Coccolithophore)).